The primary structure comprises 86 residues: DNA-directed RNA polymerase subunit omega (86 aa).

Belongs to the RNA polymerase subunit omega family. As to quaternary structure, the RNAP catalytic core consists of 2 alpha, 1 beta, 1 beta' and 1 omega subunit. When a sigma factor is associated with the core the holoenzyme is formed, which can initiate transcription.

It catalyses the reaction RNA(n) + a ribonucleoside 5'-triphosphate = RNA(n+1) + diphosphate. Promotes RNA polymerase assembly. Latches the N- and C-terminal regions of the beta' subunit thereby facilitating its interaction with the beta and alpha subunits. The sequence is that of DNA-directed RNA polymerase subunit omega from Agathobacter rectalis (strain ATCC 33656 / DSM 3377 / JCM 17463 / KCTC 5835 / VPI 0990) (Eubacterium rectale).